The following is a 429-amino-acid chain: Enolase (429 aa).

Q162 lines the (2R)-2-phosphoglycerate pocket. E204 acts as the Proton donor in catalysis. Residues D241, E283, and D310 each coordinate Mg(2+). (2R)-2-phosphoglycerate contacts are provided by K335, R364, S365, and K386. K335 (proton acceptor) is an active-site residue.

The protein belongs to the enolase family. The cofactor is Mg(2+).

It localises to the cytoplasm. The protein resides in the secreted. Its subcellular location is the cell surface. The enzyme catalyses (2R)-2-phosphoglycerate = phosphoenolpyruvate + H2O. The protein operates within carbohydrate degradation; glycolysis; pyruvate from D-glyceraldehyde 3-phosphate: step 4/5. Functionally, catalyzes the reversible conversion of 2-phosphoglycerate (2-PG) into phosphoenolpyruvate (PEP). It is essential for the degradation of carbohydrates via glycolysis. In Mycobacterium avium (strain 104), this protein is Enolase.